A 401-amino-acid polypeptide reads, in one-letter code: Methionyl-tRNA formyltransferase, mitochondrial (401 aa).

Residues 1-26 (MVKMRRITPTRLLFTCRYISNNASPP) constitute a mitochondrion transit peptide. (6R)-10-formyltetrahydrofolate-binding positions include 18 to 20 (YIS) and 66 to 70 (VVTRS).

This sequence belongs to the Fmt family. In terms of processing, phosphorylated by GCN2 in response to nutrient deprivation. Phosphorylation mediates retention of FMT1 in the cytoplasm.

It is found in the mitochondrion. The protein localises to the mitochondrion matrix. It localises to the cytoplasm. The enzyme catalyses L-methionyl-tRNA(fMet) + (6R)-10-formyltetrahydrofolate = N-formyl-L-methionyl-tRNA(fMet) + (6S)-5,6,7,8-tetrahydrofolate + H(+). Formylates methionyl-tRNA in mitochondria and the cytoplasm. Responsible for the formylation of the 8 N-terminally formylated (Nt-formylated) mitochondrial matrix proteins that are encoded by mitochondrial DNA. Nt-formylated proteins in the cytoplasm are strongly up-regulated in stationary phase or upon starvation for specific amino acids (His or Lys) and are targeted for degradation by a PSH1 E3 ubiquitin ligase-mediated fMet/N-end rule pathway. Increased Nt-formylation of cytosolic proteins appears to be important for adaptation to these stresses. Stationary phase-degraded Nt-formylated proteins include histone H3-like centromeric protein CSE4, Mediator complex subunit 3 (PGD1) and small ribosomal subunit protein uS8-A (RPS22A). The sequence is that of Methionyl-tRNA formyltransferase, mitochondrial (FMT1) from Saccharomyces cerevisiae (strain ATCC 204508 / S288c) (Baker's yeast).